The following is a 239-amino-acid chain: 7-cyano-7-deazaguanine synthase (239 aa).

13 to 23 provides a ligand contact to ATP; that stretch reads FSGGQDSTTCL. Zn(2+)-binding residues include Cys-201, Cys-216, Cys-219, and Cys-222.

The protein belongs to the QueC family. Zn(2+) serves as cofactor.

The catalysed reaction is 7-carboxy-7-deazaguanine + NH4(+) + ATP = 7-cyano-7-deazaguanine + ADP + phosphate + H2O + H(+). The protein operates within purine metabolism; 7-cyano-7-deazaguanine biosynthesis. Functionally, catalyzes the ATP-dependent conversion of 7-carboxy-7-deazaguanine (CDG) to 7-cyano-7-deazaguanine (preQ(0)). The polypeptide is 7-cyano-7-deazaguanine synthase (Bradyrhizobium sp. (strain BTAi1 / ATCC BAA-1182)).